The following is a 535-amino-acid chain: Peptide chain release factor 3 (535 aa).

The tr-type G domain maps to 8–277; sequence KRRRTFAIIS…TLVELAPPPG (270 aa). GTP is bound by residues 17–24, 85–89, and 139–142; these read SHPDAGKT, DTPGH, and NKLD.

Belongs to the TRAFAC class translation factor GTPase superfamily. Classic translation factor GTPase family. PrfC subfamily.

It is found in the cytoplasm. In terms of biological role, increases the formation of ribosomal termination complexes and stimulates activities of RF-1 and RF-2. It binds guanine nucleotides and has strong preference for UGA stop codons. It may interact directly with the ribosome. The stimulation of RF-1 and RF-2 is significantly reduced by GTP and GDP, but not by GMP. The sequence is that of Peptide chain release factor 3 from Nitrosomonas europaea (strain ATCC 19718 / CIP 103999 / KCTC 2705 / NBRC 14298).